Reading from the N-terminus, the 235-residue chain is 7-cyano-7-deazaguanine synthase (235 aa).

An ATP-binding site is contributed by 12–22 (FSGGQDSTTCL). Positions 200, 215, 218, and 221 each coordinate Zn(2+).

It belongs to the QueC family. It depends on Zn(2+) as a cofactor.

It catalyses the reaction 7-carboxy-7-deazaguanine + NH4(+) + ATP = 7-cyano-7-deazaguanine + ADP + phosphate + H2O + H(+). It functions in the pathway purine metabolism; 7-cyano-7-deazaguanine biosynthesis. Catalyzes the ATP-dependent conversion of 7-carboxy-7-deazaguanine (CDG) to 7-cyano-7-deazaguanine (preQ(0)). The sequence is that of 7-cyano-7-deazaguanine synthase from Leptothrix cholodnii (strain ATCC 51168 / LMG 8142 / SP-6) (Leptothrix discophora (strain SP-6)).